The sequence spans 444 residues: Glutamate-1-semialdehyde 2,1-aminomutase (444 aa).

Position 267 is an N6-(pyridoxal phosphate)lysine (lysine 267).

Belongs to the class-III pyridoxal-phosphate-dependent aminotransferase family. HemL subfamily. As to quaternary structure, homodimer. Requires pyridoxal 5'-phosphate as cofactor.

The protein localises to the cytoplasm. It catalyses the reaction (S)-4-amino-5-oxopentanoate = 5-aminolevulinate. It functions in the pathway porphyrin-containing compound metabolism; protoporphyrin-IX biosynthesis; 5-aminolevulinate from L-glutamyl-tRNA(Glu): step 2/2. This is Glutamate-1-semialdehyde 2,1-aminomutase from Xylella fastidiosa (strain 9a5c).